Here is a 212-residue protein sequence, read N- to C-terminus: Nascent polypeptide-associated complex subunit alpha-like protein 4 (212 aa).

Residues 25 to 35 (QKENDVVVEDV) are compositionally biased toward basic and acidic residues. The tract at residues 25 to 74 (QKENDVVVEDVKDGDEDDDDVDDDDDEIADGAGENEASKQSRSEKKSRKA) is disordered. The segment covering 36 to 53 (KDGDEDDDDVDDDDDEIA) has biased composition (acidic residues). The region spanning 65-130 (SRSEKKSRKA…AKIDDMSSQL (66 aa)) is the NAC-A/B domain. Residues 173-210 (VEAKDIDLVMTQAGVSRPKAVKALKESNGDIVSAIMEL) enclose the UBA domain.

It belongs to the NAC-alpha family.

In terms of biological role, may promote appropriate targeting of ribosome-nascent polypeptide complexes. The protein is Nascent polypeptide-associated complex subunit alpha-like protein 4 of Arabidopsis thaliana (Mouse-ear cress).